The primary structure comprises 361 residues: 5-formaminoimidazole-4-carboxamide-1-(beta)-D-ribofuranosyl 5'-monophosphate synthetase (361 aa).

5-amino-1-(5-phospho-beta-D-ribosyl)imidazole-4-carboxamide contacts are provided by His27 and Ser94. An ATP-grasp domain is found at 116-348 (RAILRWEAER…MGQRIAREIK (233 aa)). ATP-binding positions include 146–208 (PDDI…ANYC) and Glu230. Residue Asn258 participates in 5-amino-1-(5-phospho-beta-D-ribosyl)imidazole-4-carboxamide binding. Residues Gln297 and Glu310 each contribute to the Mg(2+) site.

This sequence belongs to the phosphohexose mutase family. Mg(2+) serves as cofactor. It depends on Mn(2+) as a cofactor.

It carries out the reaction 5-amino-1-(5-phospho-beta-D-ribosyl)imidazole-4-carboxamide + formate + ATP = 5-formamido-1-(5-phospho-D-ribosyl)imidazole-4-carboxamide + ADP + phosphate. Its pathway is purine metabolism; IMP biosynthesis via de novo pathway; 5-formamido-1-(5-phospho-D-ribosyl)imidazole-4-carboxamide from 5-amino-1-(5-phospho-D-ribosyl)imidazole-4-carboxamide (formate route): step 1/1. Functionally, catalyzes the ATP- and formate-dependent formylation of 5-aminoimidazole-4-carboxamide-1-beta-d-ribofuranosyl 5'-monophosphate (AICAR) to 5-formaminoimidazole-4-carboxamide-1-beta-d-ribofuranosyl 5'-monophosphate (FAICAR) in the absence of folates. This chain is 5-formaminoimidazole-4-carboxamide-1-(beta)-D-ribofuranosyl 5'-monophosphate synthetase, found in Methanococcus maripaludis (strain C7 / ATCC BAA-1331).